The chain runs to 1133 residues: Error-prone DNA polymerase (1133 aa).

This sequence belongs to the DNA polymerase type-C family. DnaE2 subfamily.

It localises to the cytoplasm. It carries out the reaction DNA(n) + a 2'-deoxyribonucleoside 5'-triphosphate = DNA(n+1) + diphosphate. In terms of biological role, DNA polymerase involved in damage-induced mutagenesis and translesion synthesis (TLS). It is not the major replicative DNA polymerase. In Anaeromyxobacter sp. (strain K), this protein is Error-prone DNA polymerase.